We begin with the raw amino-acid sequence, 350 residues long: 4-hydroxy-3-methylbut-2-enyl diphosphate reductase (350 aa).

Cysteine 19 contributes to the [4Fe-4S] cluster binding site. (2E)-4-hydroxy-3-methylbut-2-enyl diphosphate is bound by residues histidine 48 and histidine 84. Dimethylallyl diphosphate contacts are provided by histidine 48 and histidine 84. Histidine 48 and histidine 84 together coordinate isopentenyl diphosphate. Position 106 (cysteine 106) interacts with [4Fe-4S] cluster. Histidine 134 provides a ligand contact to (2E)-4-hydroxy-3-methylbut-2-enyl diphosphate. Dimethylallyl diphosphate is bound at residue histidine 134. Position 134 (histidine 134) interacts with isopentenyl diphosphate. Glutamate 136 functions as the Proton donor in the catalytic mechanism. Threonine 175 is a binding site for (2E)-4-hydroxy-3-methylbut-2-enyl diphosphate. Cysteine 205 is a [4Fe-4S] cluster binding site. Residues serine 233, serine 234, asparagine 235, and serine 278 each coordinate (2E)-4-hydroxy-3-methylbut-2-enyl diphosphate. Dimethylallyl diphosphate contacts are provided by serine 233, serine 234, asparagine 235, and serine 278. Residues serine 233, serine 234, asparagine 235, and serine 278 each contribute to the isopentenyl diphosphate site.

This sequence belongs to the IspH family. The cofactor is [4Fe-4S] cluster.

The enzyme catalyses isopentenyl diphosphate + 2 oxidized [2Fe-2S]-[ferredoxin] + H2O = (2E)-4-hydroxy-3-methylbut-2-enyl diphosphate + 2 reduced [2Fe-2S]-[ferredoxin] + 2 H(+). It catalyses the reaction dimethylallyl diphosphate + 2 oxidized [2Fe-2S]-[ferredoxin] + H2O = (2E)-4-hydroxy-3-methylbut-2-enyl diphosphate + 2 reduced [2Fe-2S]-[ferredoxin] + 2 H(+). It participates in isoprenoid biosynthesis; dimethylallyl diphosphate biosynthesis; dimethylallyl diphosphate from (2E)-4-hydroxy-3-methylbutenyl diphosphate: step 1/1. It functions in the pathway isoprenoid biosynthesis; isopentenyl diphosphate biosynthesis via DXP pathway; isopentenyl diphosphate from 1-deoxy-D-xylulose 5-phosphate: step 6/6. Functionally, catalyzes the conversion of 1-hydroxy-2-methyl-2-(E)-butenyl 4-diphosphate (HMBPP) into a mixture of isopentenyl diphosphate (IPP) and dimethylallyl diphosphate (DMAPP). Acts in the terminal step of the DOXP/MEP pathway for isoprenoid precursor biosynthesis. In Brucella anthropi (strain ATCC 49188 / DSM 6882 / CCUG 24695 / JCM 21032 / LMG 3331 / NBRC 15819 / NCTC 12168 / Alc 37) (Ochrobactrum anthropi), this protein is 4-hydroxy-3-methylbut-2-enyl diphosphate reductase.